Consider the following 499-residue polypeptide: Glycerol kinase (499 aa).

Thr12 is a binding site for ADP. ATP contacts are provided by Thr12, Thr13, and Ser14. Sn-glycerol 3-phosphate is bound at residue Thr12. Arg16 serves as a coordination point for ADP. Sn-glycerol 3-phosphate contacts are provided by Arg82, Glu83, and Tyr134. Glycerol contacts are provided by Arg82, Glu83, and Tyr134. His230 carries the post-translational modification Phosphohistidine; by HPr. Asp244 lines the sn-glycerol 3-phosphate pocket. Residues Asp244 and Gln245 each coordinate glycerol. ADP is bound by residues Thr266 and Gly309. 4 residues coordinate ATP: Thr266, Gly309, Gln313, and Gly410. The ADP site is built by Gly410 and Asn414.

It belongs to the FGGY kinase family. Homotetramer and homodimer (in equilibrium). Post-translationally, the phosphoenolpyruvate-dependent sugar phosphotransferase system (PTS), including enzyme I, and histidine-containing protein (HPr) are required for the phosphorylation, which leads to the activation of the enzyme.

It carries out the reaction glycerol + ATP = sn-glycerol 3-phosphate + ADP + H(+). It functions in the pathway polyol metabolism; glycerol degradation via glycerol kinase pathway; sn-glycerol 3-phosphate from glycerol: step 1/1. With respect to regulation, activated by phosphorylation and inhibited by fructose 1,6-bisphosphate (FBP). In terms of biological role, key enzyme in the regulation of glycerol uptake and metabolism. Catalyzes the phosphorylation of glycerol to yield sn-glycerol 3-phosphate. This is Glycerol kinase from Staphylococcus haemolyticus (strain JCSC1435).